The primary structure comprises 369 residues: Anhydro-N-acetylmuramic acid kinase (369 aa).

12-19 contributes to the ATP binding site; that stretch reads GTSMDGVD.

The protein belongs to the anhydro-N-acetylmuramic acid kinase family.

The catalysed reaction is 1,6-anhydro-N-acetyl-beta-muramate + ATP + H2O = N-acetyl-D-muramate 6-phosphate + ADP + H(+). It functions in the pathway amino-sugar metabolism; 1,6-anhydro-N-acetylmuramate degradation. Its pathway is cell wall biogenesis; peptidoglycan recycling. In terms of biological role, catalyzes the specific phosphorylation of 1,6-anhydro-N-acetylmuramic acid (anhMurNAc) with the simultaneous cleavage of the 1,6-anhydro ring, generating MurNAc-6-P. Is required for the utilization of anhMurNAc either imported from the medium or derived from its own cell wall murein, and thus plays a role in cell wall recycling. The sequence is that of Anhydro-N-acetylmuramic acid kinase from Shewanella sp. (strain MR-4).